The sequence spans 492 residues: ATP synthase subunit beta, chloroplastic (492 aa).

170 to 177 (GGAGVGKT) provides a ligand contact to ATP.

Belongs to the ATPase alpha/beta chains family. In terms of assembly, F-type ATPases have 2 components, CF(1) - the catalytic core - and CF(0) - the membrane proton channel. CF(1) has five subunits: alpha(3), beta(3), gamma(1), delta(1), epsilon(1). CF(0) has four main subunits: a(1), b(1), b'(1) and c(9-12).

The protein localises to the plastid. The protein resides in the chloroplast thylakoid membrane. The catalysed reaction is ATP + H2O + 4 H(+)(in) = ADP + phosphate + 5 H(+)(out). Its function is as follows. Produces ATP from ADP in the presence of a proton gradient across the membrane. The catalytic sites are hosted primarily by the beta subunits. The polypeptide is ATP synthase subunit beta, chloroplastic (Marchantia polymorpha (Common liverwort)).